A 139-amino-acid polypeptide reads, in one-letter code: uncharacterized protein (139 aa).

This is an uncharacterized protein from Aquifex aeolicus (strain VF5).